A 278-amino-acid polypeptide reads, in one-letter code: HTH-type transcriptional activator RhaS (278 aa).

In terms of domain architecture, HTH araC/xylS-type spans 174 to 272 (NLLLAWLEDH…NWSPRDIRQG (99 aa)). 2 consecutive DNA-binding regions (H-T-H motif) follow at residues 191–212 (DAVADQFSLSLRTLHRQLKQQT) and 239–262 (VTDIAYRCGFSDSNHFSTLFRREF).

In terms of assembly, binds DNA as a dimer.

Its subcellular location is the cytoplasm. Its function is as follows. Activates expression of the rhaBAD and rhaT operons. The sequence is that of HTH-type transcriptional activator RhaS from Shigella dysenteriae serotype 1 (strain Sd197).